A 201-amino-acid polypeptide reads, in one-letter code: Pyridoxal 5'-phosphate synthase subunit PdxT (201 aa).

48–50 provides a ligand contact to L-glutamine; it reads GES. The Nucleophile role is filled by cysteine 80. Residues arginine 109 and 137–138 contribute to the L-glutamine site; that span reads IR. Residues histidine 180 and glutamate 182 each act as charge relay system in the active site.

It belongs to the glutaminase PdxT/SNO family. In the presence of PdxS, forms a dodecamer of heterodimers. Only shows activity in the heterodimer.

It carries out the reaction aldehydo-D-ribose 5-phosphate + D-glyceraldehyde 3-phosphate + L-glutamine = pyridoxal 5'-phosphate + L-glutamate + phosphate + 3 H2O + H(+). The catalysed reaction is L-glutamine + H2O = L-glutamate + NH4(+). Its pathway is cofactor biosynthesis; pyridoxal 5'-phosphate biosynthesis. Its function is as follows. Catalyzes the hydrolysis of glutamine to glutamate and ammonia as part of the biosynthesis of pyridoxal 5'-phosphate. The resulting ammonia molecule is channeled to the active site of PdxS. In Cutibacterium acnes (strain DSM 16379 / KPA171202) (Propionibacterium acnes), this protein is Pyridoxal 5'-phosphate synthase subunit PdxT.